The primary structure comprises 405 residues: tRNA N6-adenosine threonylcarbamoyltransferase, mitochondrial (405 aa).

The N-terminal 19 residues, 1 to 19 (MAKYISNLSRIAVVRGRVS), are a transit peptide targeting the mitochondrion. A divalent metal cation-binding residues include histidine 138 and histidine 142. Residues 160–164 (LISGG), aspartate 193, glycine 213, glutamate 217, 320–321 (SN), and threonine 348 each bind substrate. Residue aspartate 349 coordinates a divalent metal cation.

It belongs to the KAE1 / TsaD family. Monomer. It depends on a divalent metal cation as a cofactor.

It localises to the mitochondrion. The catalysed reaction is L-threonylcarbamoyladenylate + adenosine(37) in tRNA = N(6)-L-threonylcarbamoyladenosine(37) in tRNA + AMP + H(+). Required for the formation of a threonylcarbamoyl group on adenosine at position 37 (t(6)A37) in mitochondrial tRNAs that read codons beginning with adenine. Probably involved in the transfer of the threonylcarbamoyl moiety of threonylcarbamoyl-AMP (TC-AMP) to the N6 group of A37. Involved in mitochondrial genome maintenance. The polypeptide is tRNA N6-adenosine threonylcarbamoyltransferase, mitochondrial (Xenopus tropicalis (Western clawed frog)).